We begin with the raw amino-acid sequence, 503 residues long: 2-(3-amino-3-carboxypropyl)histidine synthase subunit 2 (503 aa).

[4Fe-4S] cluster is bound by residues cysteine 93, cysteine 114, and cysteine 334. Residues 464-503 (GLDSVDEGEGPSKLYEGQSGIAKGYVGEGSKEKIQRDFGK) are disordered. A compositionally biased stretch (basic and acidic residues) spans 492–503 (GSKEKIQRDFGK).

Belongs to the DPH1/DPH2 family. DPH2 subfamily. As to quaternary structure, component of the 2-(3-amino-3-carboxypropyl)histidine synthase complex composed of dph1, dph2, dph3 and a NADH-dependent reductase, predominantly cbr1. [4Fe-4S] cluster serves as cofactor.

It localises to the cytoplasm. It participates in protein modification; peptidyl-diphthamide biosynthesis. Functionally, required for the first step of diphthamide biosynthesis, a post-translational modification of histidine which occurs in elongation factor 2. Dph1 and dph2 transfer a 3-amino-3-carboxypropyl (ACP) group from S-adenosyl-L-methionine (SAM) to a histidine residue, the reaction is assisted by a reduction system comprising dph3 and a NADH-dependent reductase, predominantly cbr1. Facilitates the reduction of the catalytic iron-sulfur cluster found in the dph1 subunit. This Schizosaccharomyces pombe (strain 972 / ATCC 24843) (Fission yeast) protein is 2-(3-amino-3-carboxypropyl)histidine synthase subunit 2.